The primary structure comprises 620 residues: Glutathione-regulated potassium-efflux system protein KefC (620 aa).

12 helical membrane-spanning segments follow: residues 4–24, 26–46, 54–74, 90–110, 114–134, 149–169, 178–198, 218–238, 270–290, 294–314, 327–347, and 359–379; these read HTLI…PIAV, LGLG…PWGL, SILH…GLEL, GALQ…LLGL, VAEL…MQAM, FAVL…IPLL, MGAF…VVLL, VFSA…EEVG, GLLL…GTLL, LRIV…LWLI, WFAV…GTAQ, and SLTL…VILN. Residues 399–518 enclose the RCK N-terminal domain; sequence QPRVIIAGFG…AGVEKPERET (120 aa). The interval 597 to 620 is disordered; it reads GWQGTEEGKHTGNMADEPETKPSS.

Belongs to the monovalent cation:proton antiporter 2 (CPA2) transporter (TC 2.A.37) family. KefC subfamily. In terms of assembly, homodimer. Interacts with the regulatory subunit KefF.

The protein resides in the cell inner membrane. Its function is as follows. Pore-forming subunit of a potassium efflux system that confers protection against electrophiles. Catalyzes K(+)/H(+) antiport. This is Glutathione-regulated potassium-efflux system protein KefC from Shigella sonnei (strain Ss046).